We begin with the raw amino-acid sequence, 652 residues long: Acetyl-coenzyme A synthetase (652 aa).

CoA is bound by residues 191 to 194 (RAGR), T311, and N335. Residues 387–389 (GEP), 411–416 (DTWWQT), D500, and R515 contribute to the ATP site. S523 serves as a coordination point for CoA. R526 serves as a coordination point for ATP. V537, H539, and I542 together coordinate Mg(2+). R584 serves as a coordination point for CoA. K609 carries the N6-acetyllysine modification.

It belongs to the ATP-dependent AMP-binding enzyme family. Requires Mg(2+) as cofactor. In terms of processing, acetylated. Deacetylation by the SIR2-homolog deacetylase activates the enzyme.

It carries out the reaction acetate + ATP + CoA = acetyl-CoA + AMP + diphosphate. Catalyzes the conversion of acetate into acetyl-CoA (AcCoA), an essential intermediate at the junction of anabolic and catabolic pathways. Acs undergoes a two-step reaction. In the first half reaction, Acs combines acetate with ATP to form acetyl-adenylate (AcAMP) intermediate. In the second half reaction, it can then transfer the acetyl group from AcAMP to the sulfhydryl group of CoA, forming the product AcCoA. Its function is as follows. Enables the cell to use acetate during aerobic growth to generate energy via the TCA cycle, and biosynthetic compounds via the glyoxylate shunt. Acetylates CheY, the response regulator involved in flagellar movement and chemotaxis. In Citrobacter koseri (strain ATCC BAA-895 / CDC 4225-83 / SGSC4696), this protein is Acetyl-coenzyme A synthetase.